Reading from the N-terminus, the 35-residue chain is Photosystem II reaction center protein T (35 aa).

The helical transmembrane segment at 3-23 threads the bilayer; sequence ALVYTFLLVSTLGIIFFAIFF.

The protein belongs to the PsbT family. PSII is composed of 1 copy each of membrane proteins PsbA, PsbB, PsbC, PsbD, PsbE, PsbF, PsbH, PsbI, PsbJ, PsbK, PsbL, PsbM, PsbT, PsbY, PsbZ, Psb30/Ycf12, at least 3 peripheral proteins of the oxygen-evolving complex and a large number of cofactors. It forms dimeric complexes.

The protein resides in the plastid. Its subcellular location is the chloroplast thylakoid membrane. Functionally, found at the monomer-monomer interface of the photosystem II (PS II) dimer, plays a role in assembly and dimerization of PSII. PSII is a light-driven water plastoquinone oxidoreductase, using light energy to abstract electrons from H(2)O, generating a proton gradient subsequently used for ATP formation. In Ceratophyllum demersum (Rigid hornwort), this protein is Photosystem II reaction center protein T.